A 485-amino-acid polypeptide reads, in one-letter code: N-succinylglutamate 5-semialdehyde dehydrogenase (485 aa).

220–225 (GSANTG) contacts NAD(+). Residues glutamate 243 and cysteine 278 contribute to the active site.

The protein belongs to the aldehyde dehydrogenase family. AstD subfamily.

The enzyme catalyses N-succinyl-L-glutamate 5-semialdehyde + NAD(+) + H2O = N-succinyl-L-glutamate + NADH + 2 H(+). The protein operates within amino-acid degradation; L-arginine degradation via AST pathway; L-glutamate and succinate from L-arginine: step 4/5. Its function is as follows. Catalyzes the NAD-dependent reduction of succinylglutamate semialdehyde into succinylglutamate. This Aliivibrio salmonicida (strain LFI1238) (Vibrio salmonicida (strain LFI1238)) protein is N-succinylglutamate 5-semialdehyde dehydrogenase.